The following is a 560-amino-acid chain: DNA ligase B (560 aa).

Lys124 (N6-AMP-lysine intermediate) is an active-site residue.

Belongs to the NAD-dependent DNA ligase family. LigB subfamily.

It carries out the reaction NAD(+) + (deoxyribonucleotide)n-3'-hydroxyl + 5'-phospho-(deoxyribonucleotide)m = (deoxyribonucleotide)n+m + AMP + beta-nicotinamide D-nucleotide.. Catalyzes the formation of phosphodiester linkages between 5'-phosphoryl and 3'-hydroxyl groups in double-stranded DNA using NAD as a coenzyme and as the energy source for the reaction. This is DNA ligase B from Escherichia coli O139:H28 (strain E24377A / ETEC).